Reading from the N-terminus, the 104-residue chain is ATP-dependent Clp protease adapter protein ClpS (104 aa).

Belongs to the ClpS family. As to quaternary structure, binds to the N-terminal domain of the chaperone ClpA.

Involved in the modulation of the specificity of the ClpAP-mediated ATP-dependent protein degradation. The chain is ATP-dependent Clp protease adapter protein ClpS from Paraburkholderia xenovorans (strain LB400).